A 176-amino-acid polypeptide reads, in one-letter code: ATP synthase subunit b (176 aa).

Residues Gly18–Leu38 traverse the membrane as a helical segment.

It belongs to the ATPase B chain family. F-type ATPases have 2 components, F(1) - the catalytic core - and F(0) - the membrane proton channel. F(1) has five subunits: alpha(3), beta(3), gamma(1), delta(1), epsilon(1). F(0) has three main subunits: a(1), b(2) and c(10-14). The alpha and beta chains form an alternating ring which encloses part of the gamma chain. F(1) is attached to F(0) by a central stalk formed by the gamma and epsilon chains, while a peripheral stalk is formed by the delta and b chains.

It localises to the cell membrane. In terms of biological role, f(1)F(0) ATP synthase produces ATP from ADP in the presence of a proton or sodium gradient. F-type ATPases consist of two structural domains, F(1) containing the extramembraneous catalytic core and F(0) containing the membrane proton channel, linked together by a central stalk and a peripheral stalk. During catalysis, ATP synthesis in the catalytic domain of F(1) is coupled via a rotary mechanism of the central stalk subunits to proton translocation. Functionally, component of the F(0) channel, it forms part of the peripheral stalk, linking F(1) to F(0). The protein is ATP synthase subunit b of Staphylococcus haemolyticus (strain JCSC1435).